A 157-amino-acid chain; its full sequence is Protein Smg homolog (157 aa).

The protein belongs to the Smg family.

The polypeptide is Protein Smg homolog (Xanthomonas euvesicatoria pv. vesicatoria (strain 85-10) (Xanthomonas campestris pv. vesicatoria)).